A 207-amino-acid polypeptide reads, in one-letter code: FMN-dependent NADH:quinone oxidoreductase 1 (207 aa).

Residues Ser9, 15–17 (SIS), and 139–142 (TRGG) each bind FMN.

The protein belongs to the azoreductase type 1 family. As to quaternary structure, homodimer. The cofactor is FMN.

It carries out the reaction 2 a quinone + NADH + H(+) = 2 a 1,4-benzosemiquinone + NAD(+). The enzyme catalyses N,N-dimethyl-1,4-phenylenediamine + anthranilate + 2 NAD(+) = 2-(4-dimethylaminophenyl)diazenylbenzoate + 2 NADH + 2 H(+). In terms of biological role, quinone reductase that provides resistance to thiol-specific stress caused by electrophilic quinones. Its function is as follows. Also exhibits azoreductase activity. Catalyzes the reductive cleavage of the azo bond in aromatic azo compounds to the corresponding amines. The sequence is that of FMN-dependent NADH:quinone oxidoreductase 1 from Trichormus variabilis (strain ATCC 29413 / PCC 7937) (Anabaena variabilis).